The sequence spans 78 residues: DNA-directed RNA polymerase subunit Rpo5 (78 aa).

It belongs to the archaeal Rpo5/eukaryotic RPB5 RNA polymerase subunit family. Part of the RNA polymerase complex.

It is found in the cytoplasm. It carries out the reaction RNA(n) + a ribonucleoside 5'-triphosphate = RNA(n+1) + diphosphate. In terms of biological role, DNA-dependent RNA polymerase (RNAP) catalyzes the transcription of DNA into RNA using the four ribonucleoside triphosphates as substrates. The polypeptide is DNA-directed RNA polymerase subunit Rpo5 (Methanosarcina barkeri (strain Fusaro / DSM 804)).